Reading from the N-terminus, the 271-residue chain is Energy-coupling factor transporter ATP-binding protein EcfA (271 aa).

One can recognise an ABC transporter domain in the interval 2-231 (ISIQNLTFYY…PLFLQQYKLN (230 aa)). 34-41 (GHNGSGKS) is an ATP binding site.

It belongs to the ABC transporter superfamily. Energy-coupling factor EcfA family. As to quaternary structure, forms a stable energy-coupling factor (ECF) transporter complex composed of 2 membrane-embedded substrate-binding proteins (S component), 2 ATP-binding proteins (A component) and 2 transmembrane proteins (T component).

Its subcellular location is the cell membrane. ATP-binding (A) component of a common energy-coupling factor (ECF) ABC-transporter complex. Unlike classic ABC transporters this ECF transporter provides the energy necessary to transport a number of different substrates. In Onion yellows phytoplasma (strain OY-M), this protein is Energy-coupling factor transporter ATP-binding protein EcfA.